The primary structure comprises 468 residues: Histone acetyltransferase type B catalytic subunit (468 aa).

Phosphoserine is present on Ser8. 2 interaction with histone H4 N-terminus regions span residues 44–46 (EEE) and 208–210 (YKF). Residues 248-250 (FLI) and 255-261 (QKSGNGS) each bind acetyl-CoA. Residue Glu283 is the Proton donor/acceptor of the active site. Positions 442-468 (SSNLKRKLDDDENTEGSSSKKARVEDA) are disordered.

It belongs to the HAT1 family. Component of the HAT-B complex composed of at least HAT1 and HAT2. The HAT-B complex binds to histone H4 tail. In the nucleus, interacts with GSK1 and SSB1. In the cytoplasm, interacts with ATG3 and ATG9. Phosphorylated at Ser-8 by GSK1 in the nucleus which impairs its translocation to the cytoplasm through interfering the interaction between HAT1 and SSB1. Dephosphorylation under nutrient starvation conditions promotes the interaction between HAT1 and SSB1 and results in the translocation of HAT1 from the nucleus to the cytoplasm in order to acetylate ATG3 and ATG9.

It localises to the nucleus. It is found in the cytoplasm. Its subcellular location is the preautophagosomal structure. It carries out the reaction L-lysyl-[protein] + acetyl-CoA = N(6)-acetyl-L-lysyl-[protein] + CoA + H(+). Catalytic component of the histone acetylase B (HAT-B) complex. Has intrinsic substrate specificity that modifies lysine in recognition sequence GXGKXG. Involved in DNA double-strand break repair. Required for appressorium turgor pressure, autophagy and conidial nuclear degradation. During the germination process and upon starvation conditions, translocates from the nucleus to the cytoplasm where it acetylates ATG3 at 'lys-262' and 'Lys-267', thus influencing autophagy through controlling ATG3-ATG8 interaction. Also acetylates ATG9 at 'Lys-621' to regulate ATG9 binding to vesicles, which is also important for autophagy and pathogenicity. In Pyricularia oryzae (strain 70-15 / ATCC MYA-4617 / FGSC 8958) (Rice blast fungus), this protein is Histone acetyltransferase type B catalytic subunit.